A 276-amino-acid polypeptide reads, in one-letter code: uncharacterized protein (276 aa).

Residues 1 to 20 (MMSDEQHQGGDGQTTTNTNT) are disordered.

This is an uncharacterized protein from Dictyostelium discoideum (Social amoeba).